A 341-amino-acid polypeptide reads, in one-letter code: Putative methyltransferase YGR283C (341 aa).

This sequence belongs to the class IV-like SAM-binding methyltransferase superfamily.

It is found in the nucleus. The protein resides in the nucleolus. In Saccharomyces cerevisiae (strain ATCC 204508 / S288c) (Baker's yeast), this protein is Putative methyltransferase YGR283C.